A 568-amino-acid chain; its full sequence is Serine/threonine-protein kinase RIO1 (568 aa).

Disordered stretches follow at residues 14-70 and 83-109; these read GQFD…DDDW and YVWNGGSNPQANRQTSDSSSAKMSTPA. Phosphoserine is present on residues Ser21 and Ser22. The segment covering 24-38 has biased composition (basic and acidic residues); it reads SENRDLKTVKEKDDI. Acidic residues predominate over residues 51–70; sequence GEGEIEDEEEEGYDDDDDDW. Polar residues predominate over residues 87 to 105; the sequence is GGSNPQANRQTSDSSSAKM. One can recognise a Protein kinase domain in the interval 180-479; the sequence is TEINGCISTG…TGLKKDLSGV (300 aa). ATP-binding residues include Lys208, Ser278, and Ile280. Asp324 serves as the catalytic Proton acceptor. 2 residues coordinate Mg(2+): Asn329 and Asp341. Asp341 functions as the 4-aspartylphosphate intermediate in the catalytic mechanism. Positions 490 to 568 are disordered; that stretch reads VEERTCSDSE…EKTAKTKKGK (79 aa). The span at 497 to 513 shows a compositional bias: acidic residues; that stretch reads DSEDIGSSECSDTDSEE. A compositionally biased stretch (basic and acidic residues) spans 514-543; sequence QGDHARPKKHTTDPDIDKKERKKMVKEAQR. Residues 544–568 show a composition bias toward basic residues; sequence EKRKNKIPKHVKKRKEKTAKTKKGK.

The protein belongs to the protein kinase superfamily. RIO-type Ser/Thr kinase family. In terms of assembly, associates with the precursor of the 40S ribosome subunit. Interacts (via its N-terminus) with PRMT5 (via its N-terminus). Interacts with WDR77. Found in a PRMT5 complex composed of PRMT5, WDR77 and RIOK1. Interacts (via its C-terminus) with NCL; this interaction targets NCL for PRTM5 methylation. Mg(2+) serves as cofactor.

The protein localises to the cytoplasm. It is found in the cytosol. The enzyme catalyses L-seryl-[protein] + ATP = O-phospho-L-seryl-[protein] + ADP + H(+). It catalyses the reaction L-threonyl-[protein] + ATP = O-phospho-L-threonyl-[protein] + ADP + H(+). It carries out the reaction ATP + H2O = ADP + phosphate + H(+). Functionally, involved in the final steps of cytoplasmic maturation of the 40S ribosomal subunit. Involved in processing of 18S-E pre-rRNA to the mature 18S rRNA. Required for the recycling of NOB1 and PNO1 from the late 40S precursor. The association with the very late 40S subunit intermediate may involve a translation-like checkpoint point cycle preceeding the binding to the 60S ribosomal subunit. Despite the protein kinase domain is proposed to act predominantly as an ATPase. The catalytic activity regulates its dynamic association with the 40S subunit. In addition to its role in ribosomal biogenesis acts as an adapter protein by recruiting NCL/nucleolin the to PRMT5 complex for its symmetrical methylation. This Homo sapiens (Human) protein is Serine/threonine-protein kinase RIO1.